A 314-amino-acid polypeptide reads, in one-letter code: Transmembrane protein 178B (314 aa).

The signal sequence occupies residues 1-24 (MRLLAGAGLCLALAALALLAVALS). The segment at 32 to 83 (DARRHRDRCRKPGGKRNDPGYMYTPGQHLPLRGEPPSSRIRSPRGGEPGGVR) is disordered. Positions 36–45 (HRDRCRKPGG) are enriched in basic residues. 3 helical membrane-spanning segments follow: residues 194–214 (AGFIGMAVSIILFGWMVGVLG), 228–248 (LLFLMGGTCCIISLCTCVAGI), and 274–294 (MFCAWGGLGLTLLSGFLCTLA).

It belongs to the TMEM178 family.

The protein resides in the membrane. The protein is Transmembrane protein 178B (tmem178b) of Xenopus tropicalis (Western clawed frog).